We begin with the raw amino-acid sequence, 225 residues long: GTP cyclohydrolase 1 (225 aa).

A compositionally biased stretch (basic and acidic residues) spans 1–12 (MERSKQSHDNQA). The disordered stretch occupies residues 1 to 59 (MERSKQSHDNQADSRPTTNESSLNGHFDGLVKKTPGMWDVKGRGTAGESSSHTGSSVVE). 2 stretches are compositionally biased toward polar residues: residues 13 to 24 (DSRPTTNESSLN) and 47 to 58 (GESSSHTGSSVV). Positions 149, 152, and 220 each coordinate Zn(2+).

The protein belongs to the GTP cyclohydrolase I family. As to quaternary structure, toroid-shaped homodecamer, composed of two pentamers of five dimers.

It is found in the cytoplasm. Its subcellular location is the nucleus. The catalysed reaction is GTP + H2O = 7,8-dihydroneopterin 3'-triphosphate + formate + H(+). The protein operates within cofactor biosynthesis; 7,8-dihydroneopterin triphosphate biosynthesis; 7,8-dihydroneopterin triphosphate from GTP: step 1/1. GTP shows a positive allosteric effect, and tetrahydrobiopterin inhibits the enzyme activity. Zinc is required for catalytic activity. Inhibited by Mg(2+). Functionally, may positively regulate nitric oxide synthesis in endothelial cells. May be involved in dopamine synthesis. May modify pain sensitivity and persistence. In Oncorhynchus mykiss (Rainbow trout), this protein is GTP cyclohydrolase 1 (gch1).